The chain runs to 26 residues: ATP synthase subunit gamma, mitochondrial (26 aa).

The protein belongs to the ATPase gamma chain family. As to quaternary structure, F-type ATPases have 2 components, CF(1) - the catalytic core - and CF(0) - the membrane proton channel. CF(1) has five subunits: alpha(3), beta(3), gamma(1), delta(1), epsilon(1). CF(0) has three main subunits: a, b and c.

Its subcellular location is the mitochondrion. It is found in the mitochondrion inner membrane. Functionally, mitochondrial membrane ATP synthase (F(1)F(0) ATP synthase or Complex V) produces ATP from ADP in the presence of a proton gradient across the membrane which is generated by electron transport complexes of the respiratory chain. F-type ATPases consist of two structural domains, F(1) - containing the extramembraneous catalytic core, and F(0) - containing the membrane proton channel, linked together by a central stalk and a peripheral stalk. During catalysis, ATP synthesis in the catalytic domain of F(1) is coupled via a rotary mechanism of the central stalk subunits to proton translocation. Part of the complex F(1) domain and the central stalk which is part of the complex rotary element. The gamma subunit protrudes into the catalytic domain formed of alpha(3)beta(3). Rotation of the central stalk against the surrounding alpha(3)beta(3) subunits leads to hydrolysis of ATP in three separate catalytic sites on the beta subunits. The sequence is that of ATP synthase subunit gamma, mitochondrial (ATPC) from Spinacia oleracea (Spinach).